The chain runs to 569 residues: Glucose-6-phosphate isomerase, cytosolic 2A (569 aa).

Glu-360 functions as the Proton donor in the catalytic mechanism. Active-site residues include His-391 and Lys-516.

It belongs to the GPI family. Homodimer.

The protein localises to the cytoplasm. It carries out the reaction alpha-D-glucose 6-phosphate = beta-D-fructose 6-phosphate. It functions in the pathway carbohydrate degradation; glycolysis; D-glyceraldehyde 3-phosphate and glycerone phosphate from D-glucose: step 2/4. This is Glucose-6-phosphate isomerase, cytosolic 2A (PGIC2-A) from Clarkia lewisii (Farewell-to-spring).